We begin with the raw amino-acid sequence, 363 residues long: 3-ketodihydrosphingosine reductase TSC10 (363 aa).

An NADP(+)-binding site is contributed by L10. NADPH contacts are provided by G13, S15, and G17. Residues 13-17 carry the GXSXG motif; the sequence is GGSQG. L18 serves as a coordination point for NADP(+). Residues R40, K44, D131, and L132 each coordinate NADPH. D131 lines the NADP(+) pocket. The active-site Proton donor is the S206. Positions 220, 224, and 253 each coordinate NADP(+). The active-site Proton acceptor is the Y220. The Lowers pKa of active site Tyr role is filled by K224. The helical transmembrane segment at 324 to 344 threads the bilayer; the sequence is FVQWLIGVIANLLVVPFYMVL.

It belongs to the short-chain dehydrogenases/reductases (SDR) family.

It is found in the endoplasmic reticulum membrane. It carries out the reaction sphinganine + NADP(+) = 3-oxosphinganine + NADPH + H(+). The protein operates within lipid metabolism; sphingolipid metabolism. Its function is as follows. Catalyzes the reduction of 3'-oxosphinganine (3-ketodihydrosphingosine/KDS) to sphinganine (dihydrosphingosine/DHS), the second step of de novo sphingolipid biosynthesis. The chain is 3-ketodihydrosphingosine reductase TSC10 (TSC10) from Candida glabrata (strain ATCC 2001 / BCRC 20586 / JCM 3761 / NBRC 0622 / NRRL Y-65 / CBS 138) (Yeast).